The chain runs to 426 residues: Histidine--tRNA ligase (426 aa).

This sequence belongs to the class-II aminoacyl-tRNA synthetase family. In terms of assembly, homodimer.

The protein localises to the cytoplasm. It carries out the reaction tRNA(His) + L-histidine + ATP = L-histidyl-tRNA(His) + AMP + diphosphate + H(+). This is Histidine--tRNA ligase from Streptococcus equi subsp. zooepidemicus (strain H70).